Consider the following 30-residue polypeptide: Trypsin inhibitor 7 (30 aa).

Intrachain disulfides connect C4/C21, C11/C23, and C17/C29.

Belongs to the protease inhibitor I7 (squash-type serine protease inhibitor) family.

Its subcellular location is the secreted. In terms of biological role, strongly inhibits trypsin, weakly inhibits chymotrypsin. The chain is Trypsin inhibitor 7 from Cyclanthera pedata (Achocha).